The sequence spans 558 residues: Asparagine--tRNA ligase, cytoplasmic (558 aa).

Position 71 is a phosphoserine (Ser71). Residues 79-101 (MWHREQMKSESREKKEAEDSLRR) are disordered. Basic and acidic residues predominate over residues 81–101 (HREQMKSESREKKEAEDSLRR). An N6-acetyllysine mark is found at Lys254 and Lys500.

Belongs to the class-II aminoacyl-tRNA synthetase family. As to quaternary structure, homodimer.

Its subcellular location is the cytoplasm. The enzyme catalyses tRNA(Asn) + L-asparagine + ATP = L-asparaginyl-tRNA(Asn) + AMP + diphosphate + H(+). Catalyzes the attachment of asparagine to tRNA(Asn) in a two-step reaction: asparagine is first activated by ATP to form Asn-AMP and then transferred to the acceptor end of tRNA(Asn). In addition to its essential role in protein synthesis, acts as a signaling molecule that induced migration of CCR3-expressing cells. Has an essential role in the development of the cerebral cortex, being required for proper proliferation of radial glial cells. In Macaca fascicularis (Crab-eating macaque), this protein is Asparagine--tRNA ligase, cytoplasmic.